We begin with the raw amino-acid sequence, 388 residues long: 3-dehydroquinate synthase (388 aa).

The protein belongs to the archaeal-type DHQ synthase family.

The catalysed reaction is 2-amino-2,3,7-trideoxy-D-lyxo-hept-6-ulosonate + NAD(+) + H2O = 3-dehydroquinate + NH4(+) + NADH + H(+). Its function is as follows. Catalyzes the oxidative deamination and cyclization of 2-amino-3,7-dideoxy-D-threo-hept-6-ulosonic acid (ADH) to yield 3-dehydroquinate (DHQ), which is fed into the canonical shikimic pathway of aromatic amino acid biosynthesis. The sequence is that of 3-dehydroquinate synthase from Natronomonas pharaonis (strain ATCC 35678 / DSM 2160 / CIP 103997 / JCM 8858 / NBRC 14720 / NCIMB 2260 / Gabara) (Halobacterium pharaonis).